We begin with the raw amino-acid sequence, 191 residues long: ATP synthase subunit delta (191 aa).

It belongs to the ATPase delta chain family. As to quaternary structure, F-type ATPases have 2 components, F(1) - the catalytic core - and F(0) - the membrane proton channel. F(1) has five subunits: alpha(3), beta(3), gamma(1), delta(1), epsilon(1). F(0) has three main subunits: a(1), b(2) and c(10-14). The alpha and beta chains form an alternating ring which encloses part of the gamma chain. F(1) is attached to F(0) by a central stalk formed by the gamma and epsilon chains, while a peripheral stalk is formed by the delta and b chains.

Its subcellular location is the cell inner membrane. Functionally, f(1)F(0) ATP synthase produces ATP from ADP in the presence of a proton or sodium gradient. F-type ATPases consist of two structural domains, F(1) containing the extramembraneous catalytic core and F(0) containing the membrane proton channel, linked together by a central stalk and a peripheral stalk. During catalysis, ATP synthesis in the catalytic domain of F(1) is coupled via a rotary mechanism of the central stalk subunits to proton translocation. Its function is as follows. This protein is part of the stalk that links CF(0) to CF(1). It either transmits conformational changes from CF(0) to CF(1) or is implicated in proton conduction. In Halothermothrix orenii (strain H 168 / OCM 544 / DSM 9562), this protein is ATP synthase subunit delta.